A 437-amino-acid polypeptide reads, in one-letter code: GTPase Der (437 aa).

EngA-type G domains follow at residues 3–167 and 176–352; these read NLVA…KKES and PRFA…ENRM. Residues 9–16, 56–60, 119–122, 182–189, 229–233, and 294–297 each bind GTP; these read GRPNVGKS, DTGGW, NKTD, GRPNAGKS, DTAGI, and NKWD. One can recognise a KH-like domain in the interval 353–437; the sequence is IKIPTARLNE…TPINIYIRQK (85 aa).

It belongs to the TRAFAC class TrmE-Era-EngA-EngB-Septin-like GTPase superfamily. EngA (Der) GTPase family. In terms of assembly, associates with the 50S ribosomal subunit.

In terms of biological role, GTPase that plays an essential role in the late steps of ribosome biogenesis. This is GTPase Der from Bacteroides fragilis (strain ATCC 25285 / DSM 2151 / CCUG 4856 / JCM 11019 / LMG 10263 / NCTC 9343 / Onslow / VPI 2553 / EN-2).